The chain runs to 737 residues: Photosystem I P700 chlorophyll a apoprotein A2 (737 aa).

8 helical membrane passes run 46 to 69 (IFAS…FHVA), 135 to 158 (LYNG…LHLQ), 175 to 199 (LNHH…HVAI), 273 to 291 (IAHH…GHMY), 330 to 353 (LHFQ…QHMY), 369 to 395 (AALY…IFLV), 417 to 439 (AIIS…LYVH), and 520 to 538 (FLVH…LILV). [4Fe-4S] cluster contacts are provided by C562 and C571. 2 consecutive transmembrane segments (helical) span residues 578–599 (AFYL…YWHW) and 646–668 (LSVW…MFLI). The chlorophyll a site is built by H657, M665, and Y673. Residue W674 coordinates phylloquinone. Residues 710–730 (LVGLAHFAVGYIVTYAAFLIA) form a helical membrane-spanning segment.

It belongs to the PsaA/PsaB family. The PsaA/B heterodimer binds the P700 chlorophyll special pair and subsequent electron acceptors. PSI consists of a core antenna complex that captures photons, and an electron transfer chain that converts photonic excitation into a charge separation. The eukaryotic PSI reaction center is composed of at least 11 subunits. P700 is a chlorophyll a/chlorophyll a' dimer, A0 is one or more chlorophyll a, A1 is one or both phylloquinones and FX is a shared 4Fe-4S iron-sulfur center. serves as cofactor.

It is found in the plastid. The protein resides in the cyanelle thylakoid membrane. The enzyme catalyses reduced [plastocyanin] + hnu + oxidized [2Fe-2S]-[ferredoxin] = oxidized [plastocyanin] + reduced [2Fe-2S]-[ferredoxin]. PsaA and PsaB bind P700, the primary electron donor of photosystem I (PSI), as well as the electron acceptors A0, A1 and FX. PSI is a cytochrome c6-ferredoxin oxidoreductase, converting photonic excitation into a charge separation, which transfers an electron from the donor P700 chlorophyll pair to the spectroscopically characterized acceptors A0, A1, FX, FA and FB in turn. Oxidized P700 is reduced on the lumenal side of the thylakoid membrane by cytochrome c6. This Cyanophora paradoxa protein is Photosystem I P700 chlorophyll a apoprotein A2.